Consider the following 294-residue polypeptide: Polyketide transferase grgF (294 aa).

Residues cysteine 115, aspartate 240, and histidine 269 contribute to the active site.

Belongs to the polyketide transferase af380 family. In terms of assembly, homodimer.

It functions in the pathway secondary metabolite biosynthesis. Polyketide transferase; part of the gene cluster that mediates the biosynthesis of gregatin A, a fungal polyketide featuring an alkylated furanone core. The PKS grgA synthesizes C11 and C4 polyketide chains in the presence and absence of the trans-enoyl reductase grgB, respectively. The polyketide transferase grgF is then responsible for the fusion of the two carbon chains to produce the furanone skeleton of gregatin A. GrgF first undergoes a conformational change to an open form, and the active site Cys-115 is acylated by the C11 chain. After the elimination of the phosphopantetheinyl chain, the second polyketide chain of four carbons long is delivered adjacent to the enzyme-bound C11 chain. The catalytic histidine, His-269, deprotonates a proton from C-2 of the long chain, and the resultant carbanion attacks the C-1 carbonyl of the crotonyl group to perform Claisen condensation, by which the phosphopantetheinyl chain is released. Eventually, hydrolysis of the thioester linkage probably by a His-269-activated water molecule completes the reaction to afford the grgF final product. Next, the cytochrome P450 monooxygenase grgG accepts the unstable grgF final product as substrate and performs the oxidative cyclization to furnish the gregatin scaffold and leads to the formation of desmethylgregatin A. Finally, the O-methyltransferase grgD methylates the carboxyl group of desmethylgregatin A to provide gregatin A. This is Polyketide transferase grgF from Penicillium sp.